A 265-amino-acid polypeptide reads, in one-letter code: Deoxycytidine kinase 1 (265 aa).

30 to 38 (GNIAAGKST) provides a ligand contact to ATP. Substrate contacts are provided by E55, Y88, and Q99. Residue E129 is the Proton acceptor of the active site. Substrate is bound by residues R130 and D135. 190 to 194 (RVYTR) is a binding site for ATP. Residue E199 participates in substrate binding. Position 242-244 (242-244 (EDF)) interacts with ATP.

Belongs to the DCK/DGK family. As to quaternary structure, homodimer.

Its subcellular location is the nucleus. It catalyses the reaction 2'-deoxycytidine + a ribonucleoside 5'-triphosphate = dCMP + a ribonucleoside 5'-diphosphate + H(+). The enzyme catalyses 2'-deoxyguanosine + ATP = dGMP + ADP + H(+). It carries out the reaction 2'-deoxyadenosine + ATP = dAMP + ADP + H(+). Phosphorylates the deoxyribonucleosides deoxyadenosine, deoxycytidine and deoxyguanosine with highest activity against deoxycytidine followed by deadenosine and deoxyguanosine. Shows only very minor activity against deoxyuridine and deoxythymidine. The polypeptide is Deoxycytidine kinase 1 (Xenopus laevis (African clawed frog)).